The chain runs to 312 residues: Pre-mRNA-splicing factor 38A (312 aa).

The interval 1 to 179 (MANRTVKDAH…VLEEAEQLEP (179 aa)) is N-terminal protein interaction domain. A phosphoserine mark is found at Ser11, Ser193, Ser194, Ser209, and Ser226. A coiled-coil region spans residues 170-204 (VLEEAEQLEPRVSALEEDMDDVESSEEEEEEDEKL). Residues 181–312 (VSALEEDMDD…SHKKSRRGNE (132 aa)) are disordered. The segment covering 184-202 (LEEDMDDVESSEEEEEEDE) has biased composition (acidic residues). Over residues 203–224 (KLERVPSPDHRRRSYRDLDKPR) the composition is skewed to basic and acidic residues. Composition is skewed to basic residues over residues 225–294 (RSPT…RSHS) and 301–312 (KKSHKKSRRGNE).

It belongs to the PRP38 family. Component of the spliceosome B complex. Interacts (via N-terminal interaction domain) with ZMAT2 and MFAP1.

The protein resides in the nucleus. Its function is as follows. Involved in pre-mRNA splicing as a component of the spliceosome. In Bos taurus (Bovine), this protein is Pre-mRNA-splicing factor 38A (PRPF38A).